The chain runs to 129 residues: CD59B glycoprotein (129 aa).

Positions 1-23 (MRAQRGLILLLLLLAVFCSTAVS) are cleaved as a signal peptide. One can recognise a UPAR/Ly6 domain in the interval 24-107 (LKCYNCLDPV…GLEEPNNAET (84 aa)). 5 cysteine pairs are disulfide-bonded: cysteine 26-cysteine 49, cysteine 29-cysteine 36, cysteine 42-cysteine 62, cysteine 68-cysteine 86, and cysteine 87-cysteine 92. Asparagine 39 is a glycosylation site (N-linked (GlcNAc...) asparagine). Asparagine 104 carries the GPI-anchor amidated asparagine lipid modification. Residues 105-129 (AETSSLRKTALLGTSVLVAILKFCF) constitute a propeptide, removed in mature form.

Interacts with T-cell surface antigen CD2. In terms of processing, N- and O-glycosylated. Widely expressed in the kidneys, brain, lungs, spleen and testis Testis-specific.

It is found in the cell membrane. The protein localises to the secreted. In terms of biological role, potent inhibitor of the complement membrane attack complex (MAC) action, which protects self-cells from damage during complement activation. Acts by binding to the beta-haipins of C8 (C8A and C8B) components of the assembling MAC, forming an intermolecular beta-sheet that prevents incorporation of the multiple copies of C9 required for complete formation of the osmolytic pore. The protein is CD59B glycoprotein of Mus musculus (Mouse).